A 419-amino-acid chain; its full sequence is MRAEIIAVGTEILTGQIVNTNAQFLSEKMAELGIDIYFQTAVGDNEERLLSLLDIASQRSQLVILCGGLGPTEDDLTKQTLAKFLGKSLTVDLLASRKLDRFFASRPQFARTPNNERQAQLVEGSIPLQNLTGLAVGGIVTSKGVQYMVLPGPPSELKPMVMEQVVPILSNNGTKLYSRVLRFFGIGESQLVTILEDIIKNQTDPTIAPYAKVGEVTLRLSTKAENQDEADFKLDSLEKEILALKTLDNRKLKDLLYGYGDNNSMARTVLELLKVQNKTITAAESLTAGLFQSQLAEFSGASQVFNGGFTTYSMEAKSQLLGIPKKKLQEYGVVSHFTAEAMAQQARQLLKADFGIGLTGVAGPDELEGYPAGTVFIGIATPEGVSSIKVSIGGKSRSDVRHISTLHAFDLVRRALLKI.

The protein belongs to the CinA family.

The polypeptide is Putative competence-damage inducible protein (Streptococcus agalactiae serotype III (strain NEM316)).